The sequence spans 297 residues: tRNA dimethylallyltransferase (297 aa).

10-17 serves as a coordination point for ATP; that stretch reads GITASGKS. 12–17 is a binding site for substrate; sequence TASGKS. Positions 36 to 39 are interaction with substrate tRNA; it reads DSKQ.

It belongs to the IPP transferase family. Monomer. Mg(2+) is required as a cofactor.

It carries out the reaction adenosine(37) in tRNA + dimethylallyl diphosphate = N(6)-dimethylallyladenosine(37) in tRNA + diphosphate. Its function is as follows. Catalyzes the transfer of a dimethylallyl group onto the adenine at position 37 in tRNAs that read codons beginning with uridine, leading to the formation of N6-(dimethylallyl)adenosine (i(6)A). The polypeptide is tRNA dimethylallyltransferase (Wolbachia sp. subsp. Brugia malayi (strain TRS)).